The primary structure comprises 729 residues: Pentatricopeptide repeat-containing protein At4g04370 (729 aa).

PPR repeat units follow at residues S10–P44, D45–S79, D80–R110, D111–P145, D178–R208, D209–P243, D244–V278, D279–K309, D310–L344, S345–L379, D380–S414, W415–Q445, D447–P481, C482–K512, D513–P547, N548–P583, and N584–D618. A type E motif region spans residues V619–N694. The type E(+) motif stretch occupies residues G695–M723.

Belongs to the PPR family. PCMP-E subfamily.

This is Pentatricopeptide repeat-containing protein At4g04370 (PCMP-E99) from Arabidopsis thaliana (Mouse-ear cress).